Consider the following 436-residue polypeptide: D-amino acid dehydrogenase (436 aa).

Isoleucine 3 to tryptophan 17 provides a ligand contact to FAD.

Belongs to the DadA oxidoreductase family. FAD is required as a cofactor.

It carries out the reaction a D-alpha-amino acid + A + H2O = a 2-oxocarboxylate + AH2 + NH4(+). It functions in the pathway amino-acid degradation; D-alanine degradation; NH(3) and pyruvate from D-alanine: step 1/1. Its function is as follows. Oxidative deamination of D-amino acids. This Photorhabdus laumondii subsp. laumondii (strain DSM 15139 / CIP 105565 / TT01) (Photorhabdus luminescens subsp. laumondii) protein is D-amino acid dehydrogenase.